We begin with the raw amino-acid sequence, 582 residues long: Hemagglutinin-neuraminidase (582 aa).

At 1-34 the chain is on the intravirion side; sequence MEPSKLFTISDNATFAPGPVNNAADKKTFRTCFR. A helical; Signal-anchor for type II membrane protein membrane pass occupies residues 35–55; it reads ILVLSVQAVTLILVIVTLGEL. Topologically, residues 56 to 582 are virion surface; sequence VRMINDQGLS…LPVLTRLTIT (527 aa). An N-linked (GlcNAc...) asparagine; by host glycan is attached at N127. 3 disulfide bridges follow: C178-C202, C192-C253, and C244-C257. Residues 240–245 are involved in neuraminidase activity; it reads NRKSCS. N284 and N329 each carry an N-linked (GlcNAc...) asparagine; by host glycan. 3 cysteine pairs are disulfide-bonded: C350/C471, C382/C392, and C465/C475. Residues N400 and N448 are each glycosylated (N-linked (GlcNAc...) asparagine; by host). N-linked (GlcNAc...) asparagine; by host glycosylation occurs at N507. An intrachain disulfide couples C545 to C556.

The protein belongs to the paramyxoviruses hemagglutinin-neuraminidase family. In terms of assembly, homotetramer; composed of disulfide-linked homodimers. Interacts with F protein trimer.

It localises to the virion membrane. It is found in the host cell membrane. The enzyme catalyses Hydrolysis of alpha-(2-&gt;3)-, alpha-(2-&gt;6)-, alpha-(2-&gt;8)- glycosidic linkages of terminal sialic acid residues in oligosaccharides, glycoproteins, glycolipids, colominic acid and synthetic substrates.. Attaches the virus to alpha-2,3-linked sialic acid-containing cell receptors and thereby initiating infection. Binding of HN protein to the receptor induces a conformational change that allows the F protein to trigger virion/cell membranes fusion. Binds to the glycan motifs sialyl Lewis (SLe) and GM2 ganglioside (GM2-glycan). Its function is as follows. Neuraminidase activity ensures the efficient spread of the virus by dissociating the mature virions from the neuraminic acid containing glycoproteins. In Mumps virus (strain RW) (MuV), this protein is Hemagglutinin-neuraminidase (HN).